The primary structure comprises 351 residues: L-threonine 3-dehydrogenase (351 aa).

Position 39 (cysteine 39) interacts with Zn(2+). Active-site charge relay system residues include threonine 41 and histidine 44. Histidine 64, glutamate 65, cysteine 94, cysteine 97, cysteine 100, and cysteine 108 together coordinate Zn(2+). Residues isoleucine 176, aspartate 196, arginine 201, leucine 271–isoleucine 273, and isoleucine 295–tyrosine 296 contribute to the NAD(+) site.

The protein belongs to the zinc-containing alcohol dehydrogenase family. Homotetramer. The cofactor is Zn(2+).

It is found in the cytoplasm. It carries out the reaction L-threonine + NAD(+) = (2S)-2-amino-3-oxobutanoate + NADH + H(+). It functions in the pathway amino-acid degradation; L-threonine degradation via oxydo-reductase pathway; glycine from L-threonine: step 1/2. Catalyzes the NAD(+)-dependent oxidation of L-threonine to 2-amino-3-ketobutyrate. This is L-threonine 3-dehydrogenase from Francisella tularensis subsp. mediasiatica (strain FSC147).